A 432-amino-acid polypeptide reads, in one-letter code: Serine--tRNA ligase (432 aa).

Residue 239 to 241 coordinates L-serine; that stretch reads TSE. 270-272 provides a ligand contact to ATP; the sequence is RSE. Position 293 (glutamate 293) interacts with L-serine. Residue 357–360 participates in ATP binding; the sequence is EISS. An L-serine-binding site is contributed by serine 392.

Belongs to the class-II aminoacyl-tRNA synthetase family. Type-1 seryl-tRNA synthetase subfamily. As to quaternary structure, homodimer. The tRNA molecule binds across the dimer.

Its subcellular location is the cytoplasm. The enzyme catalyses tRNA(Ser) + L-serine + ATP = L-seryl-tRNA(Ser) + AMP + diphosphate + H(+). The catalysed reaction is tRNA(Sec) + L-serine + ATP = L-seryl-tRNA(Sec) + AMP + diphosphate + H(+). The protein operates within aminoacyl-tRNA biosynthesis; selenocysteinyl-tRNA(Sec) biosynthesis; L-seryl-tRNA(Sec) from L-serine and tRNA(Sec): step 1/1. Its function is as follows. Catalyzes the attachment of serine to tRNA(Ser). Is also able to aminoacylate tRNA(Sec) with serine, to form the misacylated tRNA L-seryl-tRNA(Sec), which will be further converted into selenocysteinyl-tRNA(Sec). The protein is Serine--tRNA ligase of Methylibium petroleiphilum (strain ATCC BAA-1232 / LMG 22953 / PM1).